We begin with the raw amino-acid sequence, 431 residues long: Cleavage stimulation factor subunit 1 (431 aa).

The segment at 14–35 (LYKLIISQLLYDGYISIANGLI) is hydrophobic. WD repeat units lie at residues 106-145 (SHKG…AKSA), 171-210 (DHVD…AKRA), 215-254 (QEAE…CFVS), 260-301 (QHTD…TTFE), 303-343 (AHDG…TLVR), and 395-430 (GHNN…RSTT).

Homodimer. The CSTF complex is composed of CSTF1 (50 kDa subunit), CSTF2 (64 kDa subunit) and CSTF3 (77 kDa subunit). Interacts (via repeats WD) directly with CSTF3. Interacts (via repeat WD6) with BARD1. Interacts with ERCC6. In terms of processing, the N-terminus is blocked.

The protein localises to the nucleus. In terms of biological role, one of the multiple factors required for polyadenylation and 3'-end cleavage of mammalian pre-mRNAs. May be responsible for the interaction of CSTF with other factors to form a stable complex on the pre-mRNA. The chain is Cleavage stimulation factor subunit 1 (CSTF1) from Homo sapiens (Human).